A 737-amino-acid polypeptide reads, in one-letter code: Polyribonucleotide nucleotidyltransferase (737 aa).

Mg(2+)-binding residues include Asp514 and Asp520. The KH domain maps to 580 to 639; sequence PRIITVKIPVDKIGEVIGPKGKMINQIQEDTGADITIEDDGTIYIGAQAGSQAEAARATI. In terms of domain architecture, S1 motif spans 651–723; it reads GERYLGTVVK…SRGKLSLIPV (73 aa).

This sequence belongs to the polyribonucleotide nucleotidyltransferase family. Requires Mg(2+) as cofactor.

It is found in the cytoplasm. The catalysed reaction is RNA(n+1) + phosphate = RNA(n) + a ribonucleoside 5'-diphosphate. In terms of biological role, involved in mRNA degradation. Catalyzes the phosphorolysis of single-stranded polyribonucleotides processively in the 3'- to 5'-direction. The chain is Polyribonucleotide nucleotidyltransferase from Streptomyces griseus subsp. griseus (strain JCM 4626 / CBS 651.72 / NBRC 13350 / KCC S-0626 / ISP 5235).